A 257-amino-acid chain; its full sequence is Imidazole glycerol phosphate synthase subunit HisF (257 aa).

Residues Asp11 and Asp130 contribute to the active site.

This sequence belongs to the HisA/HisF family. As to quaternary structure, heterodimer of HisH and HisF.

The protein localises to the cytoplasm. The catalysed reaction is 5-[(5-phospho-1-deoxy-D-ribulos-1-ylimino)methylamino]-1-(5-phospho-beta-D-ribosyl)imidazole-4-carboxamide + L-glutamine = D-erythro-1-(imidazol-4-yl)glycerol 3-phosphate + 5-amino-1-(5-phospho-beta-D-ribosyl)imidazole-4-carboxamide + L-glutamate + H(+). The protein operates within amino-acid biosynthesis; L-histidine biosynthesis; L-histidine from 5-phospho-alpha-D-ribose 1-diphosphate: step 5/9. Functionally, IGPS catalyzes the conversion of PRFAR and glutamine to IGP, AICAR and glutamate. The HisF subunit catalyzes the cyclization activity that produces IGP and AICAR from PRFAR using the ammonia provided by the HisH subunit. This Prochlorococcus marinus (strain MIT 9515) protein is Imidazole glycerol phosphate synthase subunit HisF.